We begin with the raw amino-acid sequence, 230 residues long: Probable tetraspanin tspD (230 aa).

Topologically, residues 1-20 (MVEYLPSTPRYLKVPLIILN) are cytoplasmic. Residues 21 to 41 (VILWLLGLVLVIIGGICVGFF) traverse the membrane as a helical segment. Residues 42-65 (SRFKELQEVGGVSESIKSISVSLP) are Extracellular-facing. A helical membrane pass occupies residues 66–86 (AGVLSIGIFFMVLTVAGCIVA). At 87-90 (YKEK) the chain is on the cytoplasmic side. Residues 91-111 (MVGLVFYTILMLVLLVVLIGI) form a helical membrane-spanning segment. Residues 112–200 (GGEALTYHNA…VNSKLYLVGS (89 aa)) lie on the Extracellular side of the membrane. Residues Asn133, Asn138, Asn163, and Asn179 are each glycosylated (N-linked (GlcNAc...) asparagine). The chain crosses the membrane as a helical span at residues 201–221 (AGVAIGVIELVSLMFALFLIV). Residues 222 to 230 (RLYKSNSYR) lie on the Cytoplasmic side of the membrane.

It belongs to the tetraspanin (TM4SF) family.

The protein localises to the membrane. The protein is Probable tetraspanin tspD (tspD) of Dictyostelium discoideum (Social amoeba).